Reading from the N-terminus, the 157-residue chain is Ribonuclease H (157 aa).

The region spanning 3 to 144 (NSKTVHLYTD…CDELARDAAT (142 aa)) is the RNase H type-1 domain. Residues Asp12, Glu50, Asp72, and Asp136 each coordinate Mg(2+).

Belongs to the RNase H family. In terms of assembly, monomer. Requires Mg(2+) as cofactor.

The protein resides in the cytoplasm. The enzyme catalyses Endonucleolytic cleavage to 5'-phosphomonoester.. In terms of biological role, endonuclease that specifically degrades the RNA of RNA-DNA hybrids. The polypeptide is Ribonuclease H (Idiomarina loihiensis (strain ATCC BAA-735 / DSM 15497 / L2-TR)).